Reading from the N-terminus, the 844-residue chain is Fe(2+) transport protein A/Fe(2+) transporter FeoB fusion protein (844 aa).

Positions 1-73 (MRLSELHTGD…EDAAKIEVEL (73 aa)) are feoA. The segment at 74–844 (ISSNATSSPA…LIYRIGILFF (771 aa)) is feoB. Positions 79 to 106 (TSSPASNDIGEQSANPDSNESIPTNPTE) are enriched in polar residues. The interval 79–110 (TSSPASNDIGEQSANPDSNESIPTNPTEDISA) is disordered. Residues 126–289 (VIRVALIGNP…FDTLISIHEG (164 aa)) enclose the FeoB-type G domain. Residues 133-140 (GNPNCGKT), 158-162 (GVTVE), 179-182 (DLPG), 240-243 (NMFD), and 269-271 (VGR) contribute to the GTP site. 8 consecutive transmembrane segments (helical) span residues 418-438 (VLGFPLFLLFMFIMFEATFVL), 475-495 (IGGVGGVIVFLPNILILYFFI), 520-540 (LHGKSFIPLIMGFGCNVPAIM), 559-579 (PLMSCSARLPVYLLLAGAFFP), 581-601 (SAGLVLFGLYFLGILLAVLLA), 646-666 (MGSIILLASIVIWFLSYYPRY), 786-806 (IIALALMAFVLIYFPCIATVV), and 817-837 (WAVFSIIYSCSLAWIVSFLIY).

This sequence in the N-terminal section; belongs to the FeoA family. It in the C-terminal section; belongs to the TRAFAC class TrmE-Era-EngA-EngB-Septin-like GTPase superfamily. FeoB GTPase (TC 9.A.8) family.

The protein resides in the cell inner membrane. In terms of biological role, probable transporter of a GTP-driven Fe(2+) uptake system. The sequence is that of Fe(2+) transport protein A/Fe(2+) transporter FeoB fusion protein from Porphyromonas gingivalis (strain ATCC BAA-308 / W83).